The following is a 352-amino-acid chain: Protein-glutamate methylesterase/protein-glutamine glutaminase 1 (352 aa).

In terms of domain architecture, Response regulatory spans 5–122; sequence KVLVVDDSAF…SLDVLSVKEE (118 aa). The residue at position 56 (Asp56) is a 4-aspartylphosphate. In terms of domain architecture, CheB-type methylesterase spans 155 to 352; the sequence is PDQDRKLNKL…EITEEVLSML (198 aa). Active-site residues include Ser170, His197, and Asp297.

It belongs to the CheB family. In terms of processing, phosphorylated by CheA. Phosphorylation of the N-terminal regulatory domain activates the methylesterase activity.

The protein resides in the cytoplasm. It carries out the reaction [protein]-L-glutamate 5-O-methyl ester + H2O = L-glutamyl-[protein] + methanol + H(+). It catalyses the reaction L-glutaminyl-[protein] + H2O = L-glutamyl-[protein] + NH4(+). Functionally, involved in chemotaxis. Part of a chemotaxis signal transduction system that modulates chemotaxis in response to various stimuli. Catalyzes the demethylation of specific methylglutamate residues introduced into the chemoreceptors (methyl-accepting chemotaxis proteins or MCP) by CheR. Also mediates the irreversible deamidation of specific glutamine residues to glutamic acid. This Syntrophomonas wolfei subsp. wolfei (strain DSM 2245B / Goettingen) protein is Protein-glutamate methylesterase/protein-glutamine glutaminase 1.